Consider the following 358-residue polypeptide: 3-dehydroquinate synthase (358 aa).

Residues 105 to 109, 129 to 130, lysine 142, lysine 151, and 169 to 172 each bind NAD(+); these read GVVGD, TT, and TLKT. Zn(2+)-binding residues include glutamate 184, histidine 245, and histidine 262.

It belongs to the sugar phosphate cyclases superfamily. Dehydroquinate synthase family. It depends on NAD(+) as a cofactor. Co(2+) serves as cofactor. Zn(2+) is required as a cofactor.

Its subcellular location is the cytoplasm. The catalysed reaction is 7-phospho-2-dehydro-3-deoxy-D-arabino-heptonate = 3-dehydroquinate + phosphate. It participates in metabolic intermediate biosynthesis; chorismate biosynthesis; chorismate from D-erythrose 4-phosphate and phosphoenolpyruvate: step 2/7. Catalyzes the conversion of 3-deoxy-D-arabino-heptulosonate 7-phosphate (DAHP) to dehydroquinate (DHQ). The protein is 3-dehydroquinate synthase of Enterococcus faecalis (strain ATCC 47077 / OG1RF).